The primary structure comprises 188 residues: Ribose 1,5-bisphosphate phosphokinase PhnN (188 aa).

9 to 16 (GPSGAGKD) is an ATP binding site.

This sequence belongs to the ribose 1,5-bisphosphokinase family.

It catalyses the reaction alpha-D-ribose 1,5-bisphosphate + ATP = 5-phospho-alpha-D-ribose 1-diphosphate + ADP. It functions in the pathway metabolic intermediate biosynthesis; 5-phospho-alpha-D-ribose 1-diphosphate biosynthesis; 5-phospho-alpha-D-ribose 1-diphosphate from D-ribose 5-phosphate (route II): step 3/3. Functionally, catalyzes the phosphorylation of ribose 1,5-bisphosphate to 5-phospho-D-ribosyl alpha-1-diphosphate (PRPP). The protein is Ribose 1,5-bisphosphate phosphokinase PhnN of Pectobacterium atrosepticum (strain SCRI 1043 / ATCC BAA-672) (Erwinia carotovora subsp. atroseptica).